The following is a 239-amino-acid chain: Ribitol-5-phosphate cytidylyltransferase (239 aa).

CTP contacts are provided by residues 7 to 10 (FAGG) and 80 to 86 (GETGQMS).

This sequence belongs to the IspD/TarI cytidylyltransferase family. TarI subfamily.

It carries out the reaction D-ribitol 5-phosphate + CTP + H(+) = CDP-L-ribitol + diphosphate. The protein operates within cell wall biogenesis; poly(ribitol phosphate) teichoic acid biosynthesis. Functionally, catalyzes the transfer of the cytidylyl group of CTP to D-ribitol 5-phosphate. The chain is Ribitol-5-phosphate cytidylyltransferase from Streptococcus agalactiae serotype Ia (strain ATCC 27591 / A909 / CDC SS700).